The primary structure comprises 61 residues: Small ribosomal subunit protein uS14 (61 aa).

4 residues coordinate Zn(2+): C24, C27, C40, and C43.

The protein belongs to the universal ribosomal protein uS14 family. Zinc-binding uS14 subfamily. In terms of assembly, part of the 30S ribosomal subunit. Contacts proteins S3 and S10. Zn(2+) serves as cofactor.

Functionally, binds 16S rRNA, required for the assembly of 30S particles and may also be responsible for determining the conformation of the 16S rRNA at the A site. The chain is Small ribosomal subunit protein uS14 from Campylobacter lari (strain RM2100 / D67 / ATCC BAA-1060).